A 901-amino-acid chain; its full sequence is MVNPVGSSKLEQNNIKSIIGSSYNRLYSQFTSDELTEVGNYKILKQIGEGSFGKVYLALHRPTHRKVCLKTSDKNDPNIVREVFYHRQFDFPYITKLYEVIVTESKVWMALEYCPGKELYDHLLSLRRISLLECGELFAQISGAVYYAHSMHCVHRDLKLENILLDKNGNAKLTDFGFTRECMTKTTLETVCGTTVYMAPELIERRTYDGFKIDIWSLGVILYTLITGYLPFDDDDEAKTKWKIVNEEPKYDAKVIPDDARDLISRLLAKNPGERPSLSQVLRHPFLQPYGSVVLDQTQKILCRQRSGGTQFKSKLERRLLKRLKQSGVDTQAIKQSILKKKCDSLSGLWLLLLAQGKKQENCKYPKRSRSVLSVKKVIESATHNDTNGISEDVLKPSLELSRAASLSKMLNKGSDFVTSMTPVSRKKSKDSAKVLNPTLSKISSQRAYSHSIAGSPRKSNNFLQKVSSFFKSKKSSNSNSNNSIHTNVSESLIASNRGAPSSGSFLKKNSGSIQKSRTDTVANPSRTESIGSLNENVAGAIVPRSANNTTLENKKTSGNEIGLKVAPELLLNEHIRIEEPRLKRFKSSISSEISQTSTGNYDSESAENSRSISFDGKVSPPPIRNRPLSEISQISNDTYISEYSTDGNNSSFKISDTIKPSYIRKGSETTSQYSASSEKMTNGYGRKFVRRDLSIVSTASSTSERSSRTDSFYDITTATPVVTTDNRRNKNNNLKESVLPRFGTQRPWTGKRTYTTSRHGKNARRSSKRGLFKITSSNTDSIIQEVSSSEEEDHNVIYSKGKGLPTPVLQTKGLIENGLNERDEEGDDEYAIHTDGEFSIKPQFSDDVIDKQNHLPSVKAVATKRSLSEGSNWSSSYLDSDNNRRRVSSLLVEDGGNPTA.

The Protein kinase domain maps to Tyr41–Leu287. ATP is bound by residues Ile47–Val55 and Lys70. The Proton acceptor role is filled by Asp157. Ser456 bears the Phosphoserine mark. The disordered stretch occupies residues Ala500–Ser530. A Phosphoserine modification is found at Ser533. Residues Ser588–Thr599 show a composition bias toward low complexity. 2 disordered regions span residues Ser588 to Leu629 and Thr745 to Arg770. Residues Gly600–Ile613 show a composition bias toward polar residues. A compositionally biased stretch (basic residues) spans Arg759–Arg770.

This sequence belongs to the protein kinase superfamily. Ser/Thr protein kinase family.

The catalysed reaction is L-seryl-[protein] + ATP = O-phospho-L-seryl-[protein] + ADP + H(+). It catalyses the reaction L-threonyl-[protein] + ATP = O-phospho-L-threonyl-[protein] + ADP + H(+). Putative serine/threonine-protein kinase. The polypeptide is Putative serine/threonine-protein kinase YPL150W (Saccharomyces cerevisiae (strain ATCC 204508 / S288c) (Baker's yeast)).